Here is a 667-residue protein sequence, read N- to C-terminus: Protein-glutamine gamma-glutamyltransferase 4 (667 aa).

N-linked (GlcNAc...) asparagine glycans are attached at residues Asn-151, Asn-220, and Asn-227. Residues Cys-256, His-315, and Asp-338 contribute to the active site. Ca(2+) is bound by residues Asn-378 and Asp-380. N-linked (GlcNAc...) asparagine glycosylation occurs at Asn-408. Residues Glu-430 and Glu-435 each coordinate Ca(2+). The disordered stretch occupies residues 430 to 449 (EGSPEERKAMEKASGKRPDD). Asn-472 and Asn-488 each carry an N-linked (GlcNAc...) asparagine glycan.

It belongs to the transglutaminase superfamily. Transglutaminase family. In terms of assembly, homodimer. It depends on Ca(2+) as a cofactor. Post-translationally, the N-terminus is blocked. In terms of processing, probably linked to the cell membrane via a lipid-anchor, possibly a GPI-anchor. N-glycosylated on 2 Asn residues by a high mannose oligosaccharide consisting of five mannose residues and a fucosylated biantennary complex glycan. In terms of tissue distribution, expressed in the coagulating gland, the dorsal part of the prostate and in semen (at protein level). Expressed at low levels in the lateral prostate and seminal vesicle. Not expressed in the epididymis, kidney, liver, serum, sperm plug, testes and ventral prostate.

It is found in the secreted. It localises to the cell membrane. It catalyses the reaction L-glutaminyl-[protein] + L-lysyl-[protein] = [protein]-L-lysyl-N(6)-5-L-glutamyl-[protein] + NH4(+). Its function is as follows. Associated with the mammalian reproductive process. Plays an important role in the formation of the seminal coagulum through the cross-linking of specific proteins present in the seminal plasma. Transglutaminase is also required to stabilize the copulatory plug. The polypeptide is Protein-glutamine gamma-glutamyltransferase 4 (Tgm4) (Rattus norvegicus (Rat)).